Here is a 282-residue protein sequence, read N- to C-terminus: 2-dehydro-3-deoxyphosphooctonate aldolase (282 aa).

It belongs to the KdsA family.

It localises to the cytoplasm. The catalysed reaction is D-arabinose 5-phosphate + phosphoenolpyruvate + H2O = 3-deoxy-alpha-D-manno-2-octulosonate-8-phosphate + phosphate. It functions in the pathway carbohydrate biosynthesis; 3-deoxy-D-manno-octulosonate biosynthesis; 3-deoxy-D-manno-octulosonate from D-ribulose 5-phosphate: step 2/3. It participates in bacterial outer membrane biogenesis; lipopolysaccharide biosynthesis. The chain is 2-dehydro-3-deoxyphosphooctonate aldolase from Shewanella sp. (strain W3-18-1).